A 557-amino-acid polypeptide reads, in one-letter code: (-)-germacrene D synthase (557 aa).

Residues Asp310, Asp314, and Glu462 each coordinate Mg(2+). The DDXXD motif signature appears at 310 to 314; that stretch reads DDIYD.

It belongs to the terpene synthase family. Tpsa subfamily. The cofactor is Mg(2+). Expressed in flowers. Detected in stems, young leaves and tendrils.

The protein resides in the cytoplasm. The enzyme catalyses (2E,6E)-farnesyl diphosphate + H2O = (1E,4S,5E,7R)-germacra-1(10),5-dien-11-ol + diphosphate. It catalyses the reaction (2E,6E)-farnesyl diphosphate = (-)-germacrene D + diphosphate. The protein operates within secondary metabolite biosynthesis; terpenoid biosynthesis. In terms of biological role, involved in the biosynthesis of germacrene D. Can use farnesyl diphosphate as substrate, but not geranyl diphosphate or geranylgeranyl diphosphate. Produces mainly (-)-germacrene D along with gamma-cadinene. In Vitis vinifera (Grape), this protein is (-)-germacrene D synthase.